Here is a 182-residue protein sequence, read N- to C-terminus: MQFNIPTLLTLFRVALIPFFVLAFYLPFVWAPLLCALIFVFAAVTDWFDGFLARRWKQTTRFGAFLDPVADKVMVAVALVLVAEYYHSWWITLPAATMIAREIIISALREWMAEIGKRSSVAVSWIGKVKTTAQMMALFALLWRPERIVEGIGVAALYIAAVLTFWSMFQYLNAARHDLLEP.

Residues 2–12 (QFNIPTLLTLF) lie on the Cytoplasmic side of the membrane. Residues 13–37 (RVALIPFFVLAFYLPFVWAPLLCAL) traverse the membrane as a helical segment. At 38–60 (IFVFAAVTDWFDGFLARRWKQTT) the chain is on the periplasmic side. The chain crosses the membrane as a helical span at residues 61–81 (RFGAFLDPVADKVMVAVALVL). The Cytoplasmic portion of the chain corresponds to 82–86 (VAEYY). Residues 87–107 (HSWWITLPAATMIAREIIISA) traverse the membrane as a helical segment. Over 108–145 (LREWMAEIGKRSSVAVSWIGKVKTTAQMMALFALLWRP) the chain is Periplasmic. Residues 146–168 (ERIVEGIGVAALYIAAVLTFWSM) traverse the membrane as a helical segment. The Cytoplasmic segment spans residues 169–181 (FQYLNAARHDLLE).

The protein belongs to the CDP-alcohol phosphatidyltransferase class-I family.

It localises to the cell inner membrane. The enzyme catalyses a CDP-1,2-diacyl-sn-glycerol + sn-glycerol 3-phosphate = a 1,2-diacyl-sn-glycero-3-phospho-(1'-sn-glycero-3'-phosphate) + CMP + H(+). It participates in phospholipid metabolism; phosphatidylglycerol biosynthesis; phosphatidylglycerol from CDP-diacylglycerol: step 1/2. Catalyzes the conversion of cytidine diphosphate diacylglycerol (CDP-DG) and glycerol 3-phosphate into phosphatidylglycerol. Essential for the synthesis of anionic phospholipids, thereby playing a role in balancing the ratio of zwitterionic and anionic phospholipids, which is thought to be important for normal membrane function. This is CDP-diacylglycerol--glycerol-3-phosphate 3-phosphatidyltransferase from Pectobacterium atrosepticum (strain SCRI 1043 / ATCC BAA-672) (Erwinia carotovora subsp. atroseptica).